The chain runs to 672 residues: tRNA 5-methylaminomethyl-2-thiouridine biosynthesis bifunctional protein MnmC (672 aa).

The tRNA (mnm(5)s(2)U34)-methyltransferase stretch occupies residues 1-241; it reads MHKVQFADVH…KRECLQGVKA (241 aa). Residues 269–672 are FAD-dependent cmnm(5)s(2)U34 oxidoreductase; it reads IGGGIASVFS…LLKGSQVKQG (404 aa).

It in the N-terminal section; belongs to the methyltransferase superfamily. tRNA (mnm(5)s(2)U34)-methyltransferase family. The protein in the C-terminal section; belongs to the DAO family. FAD serves as cofactor.

The protein resides in the cytoplasm. It carries out the reaction 5-aminomethyl-2-thiouridine(34) in tRNA + S-adenosyl-L-methionine = 5-methylaminomethyl-2-thiouridine(34) in tRNA + S-adenosyl-L-homocysteine + H(+). Functionally, catalyzes the last two steps in the biosynthesis of 5-methylaminomethyl-2-thiouridine (mnm(5)s(2)U) at the wobble position (U34) in tRNA. Catalyzes the FAD-dependent demodification of cmnm(5)s(2)U34 to nm(5)s(2)U34, followed by the transfer of a methyl group from S-adenosyl-L-methionine to nm(5)s(2)U34, to form mnm(5)s(2)U34. The sequence is that of tRNA 5-methylaminomethyl-2-thiouridine biosynthesis bifunctional protein MnmC from Pasteurella multocida (strain Pm70).